A 538-amino-acid polypeptide reads, in one-letter code: CTP synthase (538 aa).

The interval methionine 1–leucine 267 is amidoligase domain. Residue serine 15 participates in CTP binding. Serine 15 lines the UTP pocket. Residues serine 16–isoleucine 21 and aspartate 73 contribute to the ATP site. Residues aspartate 73 and glutamate 141 each coordinate Mg(2+). CTP contacts are provided by residues aspartate 148 to glutamate 150, lysine 188 to glutamine 193, and lysine 224. UTP-binding positions include lysine 188–glutamine 193 and lysine 224. The region spanning lysine 292–serine 538 is the Glutamine amidotransferase type-1 domain. Residue glycine 351 participates in L-glutamine binding. Cysteine 378 acts as the Nucleophile; for glutamine hydrolysis in catalysis. L-glutamine-binding positions include leucine 379–glutamine 382, glutamate 402, and arginine 469. Active-site residues include histidine 513 and glutamate 515.

This sequence belongs to the CTP synthase family. As to quaternary structure, homotetramer.

The catalysed reaction is UTP + L-glutamine + ATP + H2O = CTP + L-glutamate + ADP + phosphate + 2 H(+). It carries out the reaction L-glutamine + H2O = L-glutamate + NH4(+). It catalyses the reaction UTP + NH4(+) + ATP = CTP + ADP + phosphate + 2 H(+). Its pathway is pyrimidine metabolism; CTP biosynthesis via de novo pathway; CTP from UDP: step 2/2. Its activity is regulated as follows. Allosterically activated by GTP, when glutamine is the substrate; GTP has no effect on the reaction when ammonia is the substrate. The allosteric effector GTP functions by stabilizing the protein conformation that binds the tetrahedral intermediate(s) formed during glutamine hydrolysis. Inhibited by the product CTP, via allosteric rather than competitive inhibition. Its function is as follows. Catalyzes the ATP-dependent amination of UTP to CTP with either L-glutamine or ammonia as the source of nitrogen. Regulates intracellular CTP levels through interactions with the four ribonucleotide triphosphates. This Helicobacter pylori (strain HPAG1) protein is CTP synthase.